Reading from the N-terminus, the 805-residue chain is Kinesin-like protein Klp10A (805 aa).

The tract at residues 1–274 (MDMITVGQSV…FVPLLDGQAV (274 aa)) is globular. Disordered regions lie at residues 68 to 94 (QHAA…SAIG) and 117 to 211 (IPNP…RRSH). The segment covering 80 to 94 (APMNLSRNPTQSAIG) has biased composition (polar residues). Low complexity predominate over residues 123-136 (SSNSVNTNSNSNTT). S157 carries the post-translational modification Phosphoserine. Over residues 158-179 (QAATGQQQTRIASAVPNNTLPN) the composition is skewed to polar residues. A compositionally biased stretch (low complexity) spans 180 to 200 (PSAAASAGPAAQGVATAATTQ). A coiled-coil region spans residues 205-244 (ASTRRSHALKEVERLKENREKRRARQAEMKEEKVALMNQD). The Kinesin motor domain occupies 278-610 (QITVCVRKRP…LRYADRVKEL (333 aa)). 368 to 375 (GQTGSGKT) lines the ATP pocket. Position 630 is a phosphothreonine (T630). A disordered region spans residues 633 to 688 (EEEEELNMVHPHSHQLHPNSHAPASQSNNQRAPASHHSGAVIHNNNNNNNKNGNAG). Positions 648–664 (LHPNSHAPASQSNNQRA) are enriched in polar residues. Low complexity predominate over residues 676–688 (NNNNNNNKNGNAG). A phosphoserine mark is found at S795, S797, and S800.

It belongs to the TRAFAC class myosin-kinesin ATPase superfamily. Kinesin family. MCAK/KIF2 subfamily. As to quaternary structure, interacts with Alms1a (via C-terminus). In terms of tissue distribution, expressed in male germline stem cells and spermatogonia (at protein level).

Its subcellular location is the cytoplasm. The protein resides in the cytoskeleton. The protein localises to the microtubule organizing center. It is found in the centrosome. It localises to the spindle pole. Its subcellular location is the chromosome. The protein resides in the centromere. Required during anaphase to drive sister chromatid separation to promote flux by actively depolymerizing kinetochore microtubules at their pole-associated minus ends, thereby moving chromatids through a 'poleward flux'. Involved in asymmetric cell division of sensory organ precursor (SOP) cells by playing a role in the asymmetric localization of Sara-expressing endosomes to the pIIa daughter cell but not to the pIIb cell. Klp98A targets Sara-expressing endosomes to the central spindle which is symmetrically arranged in early cell division. During late cytokinesis, central spindle asymmetry is generated by enrichment of Patronin on the pIIb side which protects microtubules from depolymerization by Klp10A while unprotected microtubules on the pIIa side are disassembled by Klp10A, leading to the asymmetric delivery of Sara-expressing endosomes to the pIIa daughter cell. In Drosophila melanogaster (Fruit fly), this protein is Kinesin-like protein Klp10A.